The following is a 64-amino-acid chain: Large ribosomal subunit protein bL33 (64 aa).

2 stretches are compositionally biased toward basic and acidic residues: residues 16 to 25 (EARTSSDPKR) and 33 to 42 (TTEKNRRNTT). Positions 16–42 (EARTSSDPKRSNGVSRYTTEKNRRNTT) are disordered.

This sequence belongs to the bacterial ribosomal protein bL33 family.

This chain is Large ribosomal subunit protein bL33, found in Prochlorococcus marinus (strain MIT 9301).